Here is a 519-residue protein sequence, read N- to C-terminus: GATA zinc finger domain-containing protein 8 (519 aa).

Disordered stretches follow at residues 25–182 (YSTG…SSSG), 198–249 (SNIN…SNNT), 273–359 (SNNM…NNKQ), and 431–453 (DERQQKKRMESDKNAEKREKRRE). Residues 37-156 (TNNSQNKTNN…SSSITSPSSN (120 aa)) are compositionally biased toward low complexity. The segment covering 172–182 (SPNNKQVSSSG) has biased composition (polar residues). Positions 273 to 357 (SNNMNINNQH…SNINNNNNNN (85 aa)) are enriched in low complexity. Positions 429–461 (KTDERQQKKRMESDKNAEKREKRREASRLLNNV) form a coiled coil. Residues 462 to 487 (CRNCKTTETPEWRKGPDGTKSLCNAC) form a GATA-type zinc finger.

This is GATA zinc finger domain-containing protein 8 (gtaH) from Dictyostelium discoideum (Social amoeba).